A 232-amino-acid chain; its full sequence is Protein shisa-3 (232 aa).

Positions 1-19 (MRLLGCFFLIFLTWGSARA) are cleaved as a signal peptide. Residues 20-93 (QGEYCHGWLD…GVSAQPVYVP (74 aa)) are Lumenal-facing. Residues 94–114 (FLIVGSIFIAFIIVGSLVAVY) traverse the membrane as a helical segment. Residues 115 to 232 (CCTCLRPKQT…NKSCPDFRQS (118 aa)) lie on the Cytoplasmic side of the membrane. A disordered region spans residues 146 to 185 (TSGNLRTPSRQSSTATSSTSTGGSVRRLSSSRADPGYLVS). Positions 151-177 (RTPSRQSSTATSSTSTGGSVRRLSSSR) are enriched in low complexity.

Belongs to the shisa family. As to quaternary structure, interacts with fzd8 and fgfr1.

The protein localises to the endoplasmic reticulum membrane. Functionally, plays an essential role in the maturation of presomitic mesoderm cells by individual attenuation of both fgf and wnt signaling. Regulates head and somite developmen. Inhibits both wnt and fgf signaling through the regulation of protein maturation and cell surface transportation of their receptors within the endoplasmic reticulum. In Xenopus laevis (African clawed frog), this protein is Protein shisa-3 (shisa3).